The primary structure comprises 481 residues: tRNA-2-methylthio-N(6)-dimethylallyladenosine synthase (481 aa).

Residues 24-140 (KKLFIESYGC…LPNLLNEVEE (117 aa)) form the MTTase N-terminal domain. [4Fe-4S] cluster is bound by residues Cys-33, Cys-69, Cys-103, Cys-178, Cys-182, and Cys-185. In terms of domain architecture, Radical SAM core spans 164–411 (MSNGITALVA…DLQQKHAWWR (248 aa)). Positions 413 to 476 (EDFIGQTVEV…SGTLKGEAVG (64 aa)) constitute a TRAM domain.

This sequence belongs to the methylthiotransferase family. MiaB subfamily. Monomer. It depends on [4Fe-4S] cluster as a cofactor.

The protein resides in the cytoplasm. The enzyme catalyses N(6)-dimethylallyladenosine(37) in tRNA + (sulfur carrier)-SH + AH2 + 2 S-adenosyl-L-methionine = 2-methylsulfanyl-N(6)-dimethylallyladenosine(37) in tRNA + (sulfur carrier)-H + 5'-deoxyadenosine + L-methionine + A + S-adenosyl-L-homocysteine + 2 H(+). In terms of biological role, catalyzes the methylthiolation of N6-(dimethylallyl)adenosine (i(6)A), leading to the formation of 2-methylthio-N6-(dimethylallyl)adenosine (ms(2)i(6)A) at position 37 in tRNAs that read codons beginning with uridine. The sequence is that of tRNA-2-methylthio-N(6)-dimethylallyladenosine synthase from Flavobacterium psychrophilum (strain ATCC 49511 / DSM 21280 / CIP 103535 / JIP02/86).